The sequence spans 445 residues: Probable D-serine dehydratase (445 aa).

Lysine 111 bears the N6-(pyridoxal phosphate)lysine mark.

It belongs to the serine/threonine dehydratase family. DsdA subfamily. It depends on pyridoxal 5'-phosphate as a cofactor.

It catalyses the reaction D-serine = pyruvate + NH4(+). The chain is Probable D-serine dehydratase from Burkholderia pseudomallei (strain 668).